The sequence spans 159 residues: Ribosomal RNA large subunit methyltransferase H (159 aa).

Residues L76, G108, and 127–132 (FSKMTF) each bind S-adenosyl-L-methionine.

The protein belongs to the RNA methyltransferase RlmH family. Homodimer.

It localises to the cytoplasm. It catalyses the reaction pseudouridine(1915) in 23S rRNA + S-adenosyl-L-methionine = N(3)-methylpseudouridine(1915) in 23S rRNA + S-adenosyl-L-homocysteine + H(+). Its function is as follows. Specifically methylates the pseudouridine at position 1915 (m3Psi1915) in 23S rRNA. The protein is Ribosomal RNA large subunit methyltransferase H of Clostridium botulinum (strain ATCC 19397 / Type A).